Here is a 356-residue protein sequence, read N- to C-terminus: 3-isopropylmalate dehydrogenase (356 aa).

Substrate is bound by residues arginine 91, arginine 101, arginine 129, and aspartate 223. Mg(2+) contacts are provided by aspartate 223, aspartate 247, and aspartate 251. 281–293 contacts NAD(+); sequence GSAPDIAGKGIAN.

Belongs to the isocitrate and isopropylmalate dehydrogenases family. LeuB type 1 subfamily. In terms of assembly, homodimer. The cofactor is Mg(2+). Requires Mn(2+) as cofactor.

It localises to the cytoplasm. The enzyme catalyses (2R,3S)-3-isopropylmalate + NAD(+) = 4-methyl-2-oxopentanoate + CO2 + NADH. It functions in the pathway amino-acid biosynthesis; L-leucine biosynthesis; L-leucine from 3-methyl-2-oxobutanoate: step 3/4. Catalyzes the oxidation of 3-carboxy-2-hydroxy-4-methylpentanoate (3-isopropylmalate) to 3-carboxy-4-methyl-2-oxopentanoate. The product decarboxylates to 4-methyl-2 oxopentanoate. The protein is 3-isopropylmalate dehydrogenase of Ralstonia nicotianae (strain ATCC BAA-1114 / GMI1000) (Ralstonia solanacearum).